A 292-amino-acid chain; its full sequence is MAGSLREIKAKIASIKQTSHITGAMQMVSASKLTRSEQAAKDFQIYASKIRQITTDLLHSELVNGSSNPMLDARPVRKSGYIVITSDKGLVGGYNSTILKAVLDMIKRDHDSEDEYAIISIGGTGSDFFKARNMNVAFELRGLEDQPSFDQVGKIISKAVGMYQNELFDELYVCYNHHINSLSREVRVEKMLPIADFDPNESEGHVLTKFELEPDRDTILDQLLPQYAESLIYGAIVDAKTAEHAAGMTAMQTATDNAKKIINDLTIQYNRARQAAITQEITEIVGGASALE.

It belongs to the ATPase gamma chain family. F-type ATPases have 2 components, CF(1) - the catalytic core - and CF(0) - the membrane proton channel. CF(1) has five subunits: alpha(3), beta(3), gamma(1), delta(1), epsilon(1). CF(0) has three main subunits: a, b and c.

The protein localises to the cell membrane. Produces ATP from ADP in the presence of a proton gradient across the membrane. The gamma chain is believed to be important in regulating ATPase activity and the flow of protons through the CF(0) complex. In Streptococcus thermophilus (strain CNRZ 1066), this protein is ATP synthase gamma chain.